A 118-amino-acid polypeptide reads, in one-letter code: MNTYAIIDTGGEQLRVEPGRFYDMRHFTLLNPSILDSNTKVLIYRVLMIHHESNIALGDSWLEDATIKGRVLHSHFKDKITIYKMRSKKKMRRKLGYRLNLARFVVDSICFDGKEFYK.

The protein belongs to the bacterial ribosomal protein bL21 family. In terms of assembly, part of the 50S ribosomal subunit.

Its subcellular location is the plastid. It localises to the chloroplast. In terms of biological role, this protein binds to 23S rRNA. The sequence is that of Large ribosomal subunit protein bL21c from Anthoceros angustus (Hornwort).